The chain runs to 321 residues: Acetyl-coenzyme A carboxylase carboxyl transferase subunit alpha (321 aa).

Residues 39 to 293 enclose the CoA carboxyltransferase C-terminal domain; that stretch reads RLQQKSQTLA…RRALGDSLRQ (255 aa).

This sequence belongs to the AccA family. In terms of assembly, acetyl-CoA carboxylase is a heterohexamer composed of biotin carboxyl carrier protein (AccB), biotin carboxylase (AccC) and two subunits each of ACCase subunit alpha (AccA) and ACCase subunit beta (AccD).

The protein resides in the cytoplasm. It catalyses the reaction N(6)-carboxybiotinyl-L-lysyl-[protein] + acetyl-CoA = N(6)-biotinyl-L-lysyl-[protein] + malonyl-CoA. The protein operates within lipid metabolism; malonyl-CoA biosynthesis; malonyl-CoA from acetyl-CoA: step 1/1. Functionally, component of the acetyl coenzyme A carboxylase (ACC) complex. First, biotin carboxylase catalyzes the carboxylation of biotin on its carrier protein (BCCP) and then the CO(2) group is transferred by the carboxyltransferase to acetyl-CoA to form malonyl-CoA. This Bordetella avium (strain 197N) protein is Acetyl-coenzyme A carboxylase carboxyl transferase subunit alpha.